The following is a 351-amino-acid chain: tRNA pseudouridine synthase D (351 aa).

D81 serves as the catalytic Nucleophile. Residues G158 to L304 form the TRUD domain.

This sequence belongs to the pseudouridine synthase TruD family.

The catalysed reaction is uridine(13) in tRNA = pseudouridine(13) in tRNA. Responsible for synthesis of pseudouridine from uracil-13 in transfer RNAs. The polypeptide is tRNA pseudouridine synthase D (Aliivibrio fischeri (strain ATCC 700601 / ES114) (Vibrio fischeri)).